A 398-amino-acid chain; its full sequence is Cytochrome b (398 aa).

Residues 45–65 (LGSIAGIALVIQIITGVILAM) form a helical membrane-spanning segment. 2 residues coordinate heme b: His95 and His109. 8 consecutive transmembrane segments (helical) span residues 97–117 (VGAS…LYYG), 129–149 (IGII…VLPW), 164–184 (FSAI…GFSV), 192–212 (FFSL…LHLL), 245–265 (FVGF…EPNY), 304–324 (LAGV…PWLD), 335–355 (PIYR…GYLG), and 364–384 (IIIS…VLPL). Heme b is bound by residues His196 and His210.

It belongs to the cytochrome b family. As to quaternary structure, the main subunits of complex b-c1 are: cytochrome b, cytochrome c1 and the Rieske protein. Heme b is required as a cofactor.

It is found in the cell membrane. Component of the ubiquinol-cytochrome c reductase complex (complex III or cytochrome b-c1 complex), which is a respiratory chain that generates an electrochemical potential coupled to ATP synthesis. The polypeptide is Cytochrome b (petB) (Rickettsia typhi (strain ATCC VR-144 / Wilmington)).